We begin with the raw amino-acid sequence, 625 residues long: tRNA uridine 5-carboxymethylaminomethyl modification enzyme MnmG (625 aa).

11-16 (GAGHAG) is an FAD binding site. 271 to 285 (GPRYCPSIETKIVTF) provides a ligand contact to NAD(+).

This sequence belongs to the MnmG family. Homodimer. Heterotetramer of two MnmE and two MnmG subunits. FAD serves as cofactor.

It is found in the cytoplasm. NAD-binding protein involved in the addition of a carboxymethylaminomethyl (cmnm) group at the wobble position (U34) of certain tRNAs, forming tRNA-cmnm(5)s(2)U34. This is tRNA uridine 5-carboxymethylaminomethyl modification enzyme MnmG from Parabacteroides distasonis (strain ATCC 8503 / DSM 20701 / CIP 104284 / JCM 5825 / NCTC 11152).